The chain runs to 332 residues: MVREKVTVSTRTLQWKCVESRTDSKRLYYGRFILSPLMKGQADTIGIALRRALLAEIEGTRITRVKFANASHEYSTIAGIQESVHEILMNLKEIVLRSNLYGTCDASISFKGPGYVTAEDIILPPHVEIVDSTQHIAWLTEPIDLCIGLKIERNRGYFIKTHANFEDGSYPIDAVFMPVQNANHSIHSYGNEKQEILFLEIWTNGSLTPKEALHEASRNLIDLFIPFLHMEKENLPLEDADHTIPLSPFTVYYKVAKNKKKLSLESLFIDQLEFPPKIYNCLKKSNIFTLLDLLNNSQEDLIKIEHFRLEDVKQILAILGKHFALDLPKNLN.

Residues 1–231 (MVREKVTVST…DLFIPFLHME (231 aa)) are alpha N-terminal domain (alpha-NTD). An alpha C-terminal domain (alpha-CTD) region spans residues 262 to 332 (LSLESLFIDQ…FALDLPKNLN (71 aa)).

It belongs to the RNA polymerase alpha chain family. In terms of assembly, in plastids the minimal PEP RNA polymerase catalytic core is composed of four subunits: alpha, beta, beta', and beta''. When a (nuclear-encoded) sigma factor is associated with the core the holoenzyme is formed, which can initiate transcription.

The protein localises to the plastid. The catalysed reaction is RNA(n) + a ribonucleoside 5'-triphosphate = RNA(n+1) + diphosphate. In terms of biological role, DNA-dependent RNA polymerase catalyzes the transcription of DNA into RNA using the four ribonucleoside triphosphates as substrates. The polypeptide is DNA-directed RNA polymerase subunit alpha (Cuscuta japonica (Japanese dodder)).